The primary structure comprises 88 residues: Sec-independent protein translocase protein TatA (88 aa).

Residues 3-23 (IFGVGLPEVTVILILALLIFG) form a helical membrane-spanning segment. Residues 56-66 (MKEEDKDESPK) show a composition bias toward basic and acidic residues. Residues 56-88 (MKEEDKDESPKSIESNQSNEINQEKIDSENSNN) are disordered. Residues 67 to 76 (SIESNQSNEI) show a composition bias toward polar residues. The segment covering 77 to 88 (NQEKIDSENSNN) has biased composition (basic and acidic residues).

The protein belongs to the TatA/E family. Forms a complex with TatC.

The protein localises to the cell inner membrane. Its function is as follows. Part of the twin-arginine translocation (Tat) system that transports large folded proteins containing a characteristic twin-arginine motif in their signal peptide across membranes. TatA could form the protein-conducting channel of the Tat system. In Prochlorococcus marinus (strain MIT 9301), this protein is Sec-independent protein translocase protein TatA.